Here is a 206-residue protein sequence, read N- to C-terminus: RNA-binding protein with multiple splicing 2 (206 aa).

Ser-2 carries the post-translational modification N-acetylserine. The region spanning 25–102 is the RRM domain; the sequence is RTLFVSGLPV…QTLRLEFAKA (78 aa). Positions 35–45 are important for homodimerization; that stretch reads DIKPRELYLLF.

Homodimer. Interacts with EEF2.

Its subcellular location is the cytoplasm. The protein resides in the nucleus. It is found in the stress granule. In terms of biological role, RNA-binding protein involved in the regulation of smooth muscle cell differentiation and proliferation in the gastrointestinal system. Binds NOG mRNA, the major inhibitor of the bone morphogenetic protein (BMP) pathway. Mediates an increase of NOG mRNA levels, thereby contributing to the negative regulation of BMP signaling pathway and promoting reversible dedifferentiation and proliferation of smooth muscle cells. Acts as a pre-mRNA alternative splicing regulator. Mediates ACTN1 and FLNB alternative splicing. Likely binds to mRNA tandem CAC trinucleotide or CA dinucleotide motifs. The sequence is that of RNA-binding protein with multiple splicing 2 (Rbpms2) from Mus musculus (Mouse).